We begin with the raw amino-acid sequence, 385 residues long: WD repeat-containing protein 74 (385 aa).

WD repeat units follow at residues 40 to 80 (RREE…FQGQ), 83 to 122 (CPGGEGMFRGLAQADGTLITCVDSGILRVWHDKDKDTSSD), 128 to 168 (RVGP…EPVF), 179 to 220 (DLRV…RRPV), 224 to 266 (TYGE…GCLK), and 267 to 306 (GLAGSVRGLQCHPSKPLLASCGLDRVLRIHRIQNPRGLEH). Ser-214 is modified (phosphoserine). Lys-311 is subject to N6-methyllysine. The tract at residues 320 to 385 (SGRDNWEDEP…KKKRPGSTSP (66 aa)) is required for nucleolar and nuclear location. 2 disordered regions span residues 323 to 345 (DNWEDEPQEPQEPNKVPLEDTET) and 360 to 385 (LSGLEQPQGALQTRRRKKKRPGSTSP). Ser-361 is modified (phosphoserine). The segment covering 372 to 385 (TRRRKKKRPGSTSP) has biased composition (basic residues).

In terms of assembly, isoform 1 interacts (through WDR repeats) with NVL; the interaction is independent of RNA or pre-60S ribosome particles. Isoform 2 does not interact with NVL. Interacts with MTREX; the interaction dissociation in a late stage of rRNA synthesis is required for appropriate maturation of pre-60S particles and depends on the ATPase activity of NVL.

It is found in the nucleus. Its subcellular location is the nucleolus. Its function is as follows. Regulatory protein of the MTREX-exosome complex involved in the synthesis of the 60S ribosomal subunit. Participates in an early cleavage of the pre-rRNA processing pathway in cooperation with NVL. Required for blastocyst formation, is necessary for RNA transcription, processing and/or stability during preimplantation development. This is WD repeat-containing protein 74 (WDR74) from Homo sapiens (Human).